Consider the following 391-residue polypeptide: Dual-specificity RNA methyltransferase RlmN (391 aa).

Glutamate 112 (proton acceptor) is an active-site residue. Residues 118–368 (ESDRGTLCIS…VRTPRGRDIL (251 aa)) enclose the Radical SAM core domain. Cysteines 125 and 371 form a disulfide. [4Fe-4S] cluster contacts are provided by cysteine 132, cysteine 136, and cysteine 139. S-adenosyl-L-methionine-binding positions include 197–198 (GE), serine 229, 251–253 (SLH), and asparagine 328. Cysteine 371 (S-methylcysteine intermediate) is an active-site residue.

The protein belongs to the radical SAM superfamily. RlmN family. The cofactor is [4Fe-4S] cluster.

It localises to the cytoplasm. The catalysed reaction is adenosine(2503) in 23S rRNA + 2 reduced [2Fe-2S]-[ferredoxin] + 2 S-adenosyl-L-methionine = 2-methyladenosine(2503) in 23S rRNA + 5'-deoxyadenosine + L-methionine + 2 oxidized [2Fe-2S]-[ferredoxin] + S-adenosyl-L-homocysteine. It carries out the reaction adenosine(37) in tRNA + 2 reduced [2Fe-2S]-[ferredoxin] + 2 S-adenosyl-L-methionine = 2-methyladenosine(37) in tRNA + 5'-deoxyadenosine + L-methionine + 2 oxidized [2Fe-2S]-[ferredoxin] + S-adenosyl-L-homocysteine. Functionally, specifically methylates position 2 of adenine 2503 in 23S rRNA and position 2 of adenine 37 in tRNAs. m2A2503 modification seems to play a crucial role in the proofreading step occurring at the peptidyl transferase center and thus would serve to optimize ribosomal fidelity. This is Dual-specificity RNA methyltransferase RlmN from Beijerinckia indica subsp. indica (strain ATCC 9039 / DSM 1715 / NCIMB 8712).